A 361-amino-acid chain; its full sequence is S-adenosylmethionine:tRNA ribosyltransferase-isomerase (361 aa).

This sequence belongs to the QueA family. Monomer.

It localises to the cytoplasm. It carries out the reaction 7-aminomethyl-7-carbaguanosine(34) in tRNA + S-adenosyl-L-methionine = epoxyqueuosine(34) in tRNA + adenine + L-methionine + 2 H(+). It functions in the pathway tRNA modification; tRNA-queuosine biosynthesis. Its function is as follows. Transfers and isomerizes the ribose moiety from AdoMet to the 7-aminomethyl group of 7-deazaguanine (preQ1-tRNA) to give epoxyqueuosine (oQ-tRNA). This chain is S-adenosylmethionine:tRNA ribosyltransferase-isomerase, found in Mesorhizobium japonicum (strain LMG 29417 / CECT 9101 / MAFF 303099) (Mesorhizobium loti (strain MAFF 303099)).